The chain runs to 375 residues: MPGDYYEILGVSRDANKDEIKRAYRRLARKYHPDVNKEIGAEERFKEINRAYEILSEPETRARYDRFGEAGVSSGAGSGFEYGDMGGIADIFETIFSGFGGMGTGTSSRRRTGPVRGDDLRLDFKLNFREAVFGGEKEIRIRHLETCQVCEGSGAKPGTGSRTCSTCSGSGQVRRATRTPFGTFAQVSVCPTCNGSGEVIEEKCEACGGSGRKQETKKLKITIPAGVDNGTRLRVSREGDAGQRGGPPGDLYVYLSVETDEEFQREGIDIKSEISISYLQAILGCRLSVNTVDGPEEITIEPGTQPNTVLTLPNRGVPKLGNPVARGDHLITINVSIPTRVNPEERELLEKLAKIRGESHGKGGIEGFLGGLFHK.

Residues 4-68 (DYYEILGVSR…ETRARYDRFG (65 aa)) form the J domain. Residues 134 to 216 (GGEKEIRIRH…CGGSGRKQET (83 aa)) form a CR-type zinc finger. 8 residues coordinate Zn(2+): Cys-147, Cys-150, Cys-164, Cys-167, Cys-190, Cys-193, Cys-204, and Cys-207. 4 CXXCXGXG motif repeats span residues 147–154 (CQVCEGSG), 164–171 (CSTCSGSG), 190–197 (CPTCNGSG), and 204–211 (CEACGGSG).

It belongs to the DnaJ family. In terms of assembly, homodimer. It depends on Zn(2+) as a cofactor.

It localises to the cytoplasm. Functionally, participates actively in the response to hyperosmotic and heat shock by preventing the aggregation of stress-denatured proteins and by disaggregating proteins, also in an autonomous, DnaK-independent fashion. Unfolded proteins bind initially to DnaJ; upon interaction with the DnaJ-bound protein, DnaK hydrolyzes its bound ATP, resulting in the formation of a stable complex. GrpE releases ADP from DnaK; ATP binding to DnaK triggers the release of the substrate protein, thus completing the reaction cycle. Several rounds of ATP-dependent interactions between DnaJ, DnaK and GrpE are required for fully efficient folding. Also involved, together with DnaK and GrpE, in the DNA replication of plasmids through activation of initiation proteins. This Gloeothece citriformis (strain PCC 7424) (Cyanothece sp. (strain PCC 7424)) protein is Chaperone protein DnaJ.